The chain runs to 112 residues: Small ribosomal subunit protein uS11c (112 aa).

The protein belongs to the universal ribosomal protein uS11 family. Part of the 30S ribosomal subunit.

The protein resides in the plastid. The protein is Small ribosomal subunit protein uS11c of Euglena longa (Euglenophycean alga).